Consider the following 431-residue polypeptide: Histidinol dehydrogenase (431 aa).

The NAD(+) site is built by Y127, Q185, and N208. Positions 234, 256, and 259 each coordinate substrate. Positions 256 and 259 each coordinate Zn(2+). Catalysis depends on proton acceptor residues E323 and H324. H324, D357, E411, and H416 together coordinate substrate. Residue D357 coordinates Zn(2+). A Zn(2+)-binding site is contributed by H416.

Belongs to the histidinol dehydrogenase family. Zn(2+) serves as cofactor.

It carries out the reaction L-histidinol + 2 NAD(+) + H2O = L-histidine + 2 NADH + 3 H(+). It functions in the pathway amino-acid biosynthesis; L-histidine biosynthesis; L-histidine from 5-phospho-alpha-D-ribose 1-diphosphate: step 9/9. In terms of biological role, catalyzes the sequential NAD-dependent oxidations of L-histidinol to L-histidinaldehyde and then to L-histidine. This chain is Histidinol dehydrogenase, found in Vibrio vulnificus (strain CMCP6).